The sequence spans 73 residues: Excelsatoxin A (73 aa).

Residues 1 to 20 (MRFALVAAITIALLVAGSVA) form the signal peptide. Residues 21–37 (DESSEDIDNIVIKTPLD) constitute a propeptide that is removed on maturation. Cystine bridges form between cysteine 41–cysteine 58, cysteine 46–cysteine 60, and cysteine 54–cysteine 69.

This sequence belongs to the gympietide family. Expressed in trichomes, that are stiff epidermal hairs located on the surface of petioles and leaves. Not expressed in other aerial parts.

The protein localises to the secreted. In terms of biological role, neurotoxin certainly responsible for the defensive, persistent, and painful stings of the giant stinging tree. Inhibits inactivation of Nav1.7/SCN9A sodium channel in sensory neurons by directly interacting with TMEM233, a newly described Nav-interacting protein. Has virtually no effect on Nav1.7/SCN9A function in heterologous expression systems and in neurons that do not express TMEM233. Also weakly but significantly affects Nav1.8/SCN10A. Coexpression of TMEM233 with Nav also confers ExTxA sensitivity to Nav1.1-Nav1.6. On the Nav1.7/SCN9A channel, causes a significant hyperpolarizing shift in the voltage dependence of activation. Its effects on Nav currents are irreversible, with no apparent reduction in activity even after repeated wash steps over 30 minutes. Does not show activity on Nav1.9/SCN11A. Does not show insecticidal activities. In vivo, induces nocifensive behavior in mice (licking or biting and shaking or lifting of the affected paw) lasting for approximately 1 hour. This chain is Excelsatoxin A, found in Dendrocnide excelsa (Giant stinging tree).